Reading from the N-terminus, the 917-residue chain is Lipoxygenase 6, chloroplastic (917 aa).

A chloroplast-targeting transit peptide spans 1 to 40 (MFVASPVKTNFNGVSLVKSPAFSALSCRKQHRVPISRQVR). Basic and acidic residues predominate over residues 46-57 (EEKAVDQEDGKK). Residues 46–66 (EEKAVDQEDGKKSTNKPLINS) form a disordered region. The region spanning 98-216 (ERFEHQLELF…DNPQARIIFR (119 aa)) is the PLAT domain. Residues 219–917 (PCLPSETPDG…GRGIPNSISI (699 aa)) enclose the Lipoxygenase domain. Residues His575, His580, His767, and Asn771 each coordinate Fe cation. Residues 880 to 904 (KDKKLKNRTGAGMPPYELLLPTSPH) are disordered. Ile917 is a binding site for Fe cation.

The protein belongs to the lipoxygenase family. It depends on Fe cation as a cofactor.

The protein resides in the plastid. It localises to the chloroplast. It carries out the reaction (9Z,12Z)-octadecadienoate + O2 = (13S)-hydroperoxy-(9Z,11E)-octadecadienoate. The catalysed reaction is (9Z,12Z,15Z)-octadecatrienoate + O2 = (13S)-hydroperoxy-(9Z,11E,15Z)-octadecatrienoate. The protein operates within lipid metabolism; oxylipin biosynthesis. In terms of biological role, plant lipoxygenases may be involved in a number of diverse aspects of plant physiology including growth and development, pest resistance, and senescence or responses to wounding. Catalyzes the hydroperoxidation of lipids containing a cis,cis-1,4-pentadiene structure. 13S-lipoxygenase that can use linolenic acid as substrates. In Arabidopsis thaliana (Mouse-ear cress), this protein is Lipoxygenase 6, chloroplastic.